Consider the following 273-residue polypeptide: N-alpha-acetyltransferase 30 (273 aa).

2 disordered regions span residues 1-39 and 62-85; these read MADA…HQLN and QKTR…PNGL. The N-acetyltransferase domain occupies 125-273; that stretch reads RYVRYESELQ…DALRLKLWLR (149 aa).

This sequence belongs to the acetyltransferase family. MAK3 subfamily. As to quaternary structure, component of the N-terminal acetyltransferase C (NatC) complex.

The protein localises to the cytoplasm. Its subcellular location is the nucleus. The catalysed reaction is N-terminal L-methionyl-L-leucyl-[protein] + acetyl-CoA = N-terminal N(alpha)-acetyl-L-methionyl-L-leucyl-[protein] + CoA + H(+). The enzyme catalyses N-terminal L-methionyl-L-isoleucyl-[protein] + acetyl-CoA = N-terminal N(alpha)-acetyl-L-methionyl-L-isoleucyl-[protein] + CoA + H(+). It carries out the reaction N-terminal L-methionyl-L-phenylalanyl-[protein] + acetyl-CoA = N-terminal N(alpha)-acetyl-L-methionyl-L-phenylalanyl-[protein] + CoA + H(+). It catalyses the reaction N-terminal L-methionyl-L-tryptophyl-[protein] + acetyl-CoA = N-terminal N(alpha)-acetyl-L-methionyl-L-tryptophyl-[protein] + CoA + H(+). The catalysed reaction is N-terminal L-methionyl-L-tyrosyl-[protein] + acetyl-CoA = N-terminal N(alpha)-acetyl-L-methionyl-L-tyrosyl-[protein] + CoA + H(+). In terms of biological role, catalytic subunit of the N-terminal acetyltransferase C (NatC) complex. Catalyzes acetylation of the N-terminal methionine residues of peptides beginning with Met-Leu-Ala and Met-Leu-Gly. N-terminal acetylation protects proteins from ubiquitination and degradation by the N-end rule pathway. The polypeptide is N-alpha-acetyltransferase 30 (naa30) (Xenopus laevis (African clawed frog)).